Consider the following 191-residue polypeptide: Holliday junction branch migration complex subunit RuvA (191 aa).

The interval 1–64 (MIGRITGTLA…EDAHLLYGFG (64 aa)) is domain I. The domain II stretch occupies residues 65-138 (SEVERAAFRE…KGKPVFAGAL (74 aa)). Positions 138–141 (LASV) are flexible linker. Residues 142 to 191 (PSAGASDDVRQALLALGYNERETAATVRELPAGLAVGEAIRQALRALSRA) are domain III.

It belongs to the RuvA family. As to quaternary structure, homotetramer. Forms an RuvA(8)-RuvB(12)-Holliday junction (HJ) complex. HJ DNA is sandwiched between 2 RuvA tetramers; dsDNA enters through RuvA and exits via RuvB. An RuvB hexamer assembles on each DNA strand where it exits the tetramer. Each RuvB hexamer is contacted by two RuvA subunits (via domain III) on 2 adjacent RuvB subunits; this complex drives branch migration. In the full resolvosome a probable DNA-RuvA(4)-RuvB(12)-RuvC(2) complex forms which resolves the HJ.

The protein resides in the cytoplasm. The RuvA-RuvB-RuvC complex processes Holliday junction (HJ) DNA during genetic recombination and DNA repair, while the RuvA-RuvB complex plays an important role in the rescue of blocked DNA replication forks via replication fork reversal (RFR). RuvA specifically binds to HJ cruciform DNA, conferring on it an open structure. The RuvB hexamer acts as an ATP-dependent pump, pulling dsDNA into and through the RuvAB complex. HJ branch migration allows RuvC to scan DNA until it finds its consensus sequence, where it cleaves and resolves the cruciform DNA. The protein is Holliday junction branch migration complex subunit RuvA of Thiobacillus denitrificans (strain ATCC 25259 / T1).